A 595-amino-acid chain; its full sequence is Protein halfway (595 aa).

Disordered regions lie at residues 1–42 and 64–98; these read MLLT…ADDE and TGAA…PLLP. N-linked (GlcNAc...) asparagine glycans are attached at residues asparagine 250 and asparagine 255. The LRRNT domain maps to 347 to 402; the sequence is ESTKRCMTKCPVIPNYGSCKCRFESIMIIQDDQSKPKCHVDCSNLGLVELPPRLPD. 3 LRR repeats span residues 403 to 424, 429 to 450, and 454 to 475; these read NTFV…FQTN, NINR…EGTK, and NFQR…FLNN. The LRRCT domain occupies 489–538; it reads NKLQCDCNSAKTLQNWLKERSTDIPDYMEIRCRNIPQSVIELQEAKLCQS.

Its function is as follows. Has a role in the ecdysone induced cascade; probably indirect control of 'late' ecdysone genes. The sequence is that of Protein halfway (hfw) from Drosophila pseudoobscura pseudoobscura (Fruit fly).